Consider the following 256-residue polypeptide: Tryptophan synthase alpha chain (256 aa).

Catalysis depends on proton acceptor residues Glu46 and Asp57.

Belongs to the TrpA family. Tetramer of two alpha and two beta chains.

It catalyses the reaction (1S,2R)-1-C-(indol-3-yl)glycerol 3-phosphate + L-serine = D-glyceraldehyde 3-phosphate + L-tryptophan + H2O. Its pathway is amino-acid biosynthesis; L-tryptophan biosynthesis; L-tryptophan from chorismate: step 5/5. In terms of biological role, the alpha subunit is responsible for the aldol cleavage of indoleglycerol phosphate to indole and glyceraldehyde 3-phosphate. The protein is Tryptophan synthase alpha chain of Bacteroides thetaiotaomicron (strain ATCC 29148 / DSM 2079 / JCM 5827 / CCUG 10774 / NCTC 10582 / VPI-5482 / E50).